The chain runs to 441 residues: uncharacterized protein (441 aa).

78-85 (GPRQAGKT) lines the ATP pocket.

This is an uncharacterized protein from Mycobacterium bovis (strain ATCC BAA-935 / AF2122/97).